Here is a 216-residue protein sequence, read N- to C-terminus: Uracil-DNA glycosylase (216 aa).

Asp-59 serves as the catalytic Proton acceptor.

The protein belongs to the uracil-DNA glycosylase (UDG) superfamily. UNG family.

The protein resides in the cytoplasm. It catalyses the reaction Hydrolyzes single-stranded DNA or mismatched double-stranded DNA and polynucleotides, releasing free uracil.. Its function is as follows. Excises uracil residues from the DNA which can arise as a result of misincorporation of dUMP residues by DNA polymerase or due to deamination of cytosine. The chain is Uracil-DNA glycosylase from Staphylococcus epidermidis (strain ATCC 12228 / FDA PCI 1200).